Here is a 480-residue protein sequence, read N- to C-terminus: Ftsk domain-containing protein YdcQ (480 aa).

2 consecutive transmembrane segments (helical) span residues 25–45 and 71–91; these read VKLAGAIIFVPVFLLSMFLFW and SVLCSVLIAVGSIVASYFLLF. In terms of domain architecture, FtsK spans 217–399; sequence MKHISWQFDK…LGLMSDTGYG (183 aa). 234 to 241 contacts ATP; sequence GGTGGGKT.

The protein localises to the cell membrane. The sequence is that of Ftsk domain-containing protein YdcQ (ydcQ) from Bacillus subtilis (strain 168).